A 316-amino-acid polypeptide reads, in one-letter code: Methionyl-tRNA formyltransferase (316 aa).

Residue 112–115 coordinates (6S)-5,6,7,8-tetrahydrofolate; it reads SLLP.

Belongs to the Fmt family.

It carries out the reaction L-methionyl-tRNA(fMet) + (6R)-10-formyltetrahydrofolate = N-formyl-L-methionyl-tRNA(fMet) + (6S)-5,6,7,8-tetrahydrofolate + H(+). In terms of biological role, attaches a formyl group to the free amino group of methionyl-tRNA(fMet). The formyl group appears to play a dual role in the initiator identity of N-formylmethionyl-tRNA by promoting its recognition by IF2 and preventing the misappropriation of this tRNA by the elongation apparatus. The sequence is that of Methionyl-tRNA formyltransferase from Glaesserella parasuis serovar 5 (strain SH0165) (Haemophilus parasuis).